A 309-amino-acid polypeptide reads, in one-letter code: Taste receptor type 2 member 8 (309 aa).

Topologically, residues 1-7 are extracellular; the sequence is MFSPADN. A helical membrane pass occupies residues 8-28; that stretch reads IFIILITGEFILGILGNGYIA. Residues 29 to 50 lie on the Cytoplasmic side of the membrane; the sequence is LVNWIDWIKKKKISTVDYILTN. Residues 51-71 traverse the membrane as a helical segment; that stretch reads LVIARICLISVMVVNGIVIVL. At 72–82 the chain is on the extracellular side; that stretch reads NPDVYTKNKQQ. A helical transmembrane segment spans residues 83 to 103; sequence IVIFTFWTFANYLNMWITTCL. The Cytoplasmic segment spans residues 104-131; that stretch reads NVFYFLKIASSSHPLFLWLKWKIDMVVH. A helical transmembrane segment spans residues 132 to 152; that stretch reads WILLGCFAISLLVSLIAAIVL. Residues 153 to 184 are Extracellular-facing; sequence SCDYRFHAIAKHKRNITEMFXVSKIPYFEPLT. N-linked (GlcNAc...) asparagine glycosylation occurs at Asn-167. A helical transmembrane segment spans residues 185–205; sequence LFNLFAIVPFIVSLISFFLLV. At 206–239 the chain is on the cytoplasmic side; sequence RSLWRHTKQIKLYATGSRDPSTEVHVRAIKTMTS. The chain crosses the membrane as a helical span at residues 240–260; the sequence is FIFFFFLYFISSILMTFSYLM. Residues 261–266 are Extracellular-facing; sequence TKYKLA. A helical transmembrane segment spans residues 267 to 287; that stretch reads VEFGEIAAILYPLGHSLILIV. At 288–309 the chain is on the cytoplasmic side; the sequence is LNNKLRQIFVRMLTCRKIACVI.

It belongs to the G-protein coupled receptor T2R family.

It is found in the membrane. In terms of biological role, receptor that may play a role in the perception of bitterness and is gustducin-linked. May play a role in sensing the chemical composition of the gastrointestinal content. The activity of this receptor may stimulate alpha gustducin, mediate PLC-beta-2 activation and lead to the gating of TRPM5. The polypeptide is Taste receptor type 2 member 8 (TAS2R8) (Pan troglodytes (Chimpanzee)).